Reading from the N-terminus, the 135-residue chain is MVKFLKQNKAVILLQGRYAGKKAVIIKSFDDGTSDRRYGHCLVAGLKKYPSKVIRKDSAKKTAKKSRVKCFIKLVNYQHLMPTRYTLDVDLKEVATLDALKSKDKKVTALKEAKAKLEERFKTGKNRWFFTKLRF.

The protein belongs to the eukaryotic ribosomal protein eL27 family.

This is Large ribosomal subunit protein eL27y (RPL27B) from Arabidopsis thaliana (Mouse-ear cress).